A 363-amino-acid polypeptide reads, in one-letter code: MVKFLSLTSSVTALLLLSLGANGVAAAATTCTVAKSGSDDTAAITKAFSDCKNGGTVVFSKDTTYNLNGILILSDLKNVNIELAGTIKLPGFDKAVKGLKSYIQLIGTNVKVYGGGVINANHSSVSDISIINSPRAHMGVTNATDVLINNITLHTASTSSLRPKNTDALDVSRSSNVVFQNSKLTVGDDCLAINEEVTNVTLSKITCNGGHGFSVGSLGKGGANQHVKTVRIHDSVCNDCQNGVRIKTWPGGKGSVSDIKFNNVELNNVENPILITTHYCDKNQMNYCTNNDKTSLSISDVVISDITGSASNDGNPIVSINCSTSTPCTDFTLSGVKITKASNTPKNVCVNLDGSSKIAECSA.

An N-terminal signal peptide occupies residues 1–26; sequence MVKFLSLTSSVTALLLLSLGANGVAA. Residues asparagine 121, asparagine 142, and asparagine 150 are each glycosylated (N-linked (GlcNAc...) asparagine). PbH1 repeat units lie at residues 143–173, 174–195, 197–217, 227–248, and 256–277; these read ATDV…DVSR, SSNV…AINE, VTNV…SVGS, VKTV…RIKT, and VSDI…LITT. Aspartate 188 functions as the Proton donor in the catalytic mechanism. Residues cysteine 190 and cysteine 207 are joined by a disulfide bond. Asparagine 199 is a glycosylation site (N-linked (GlcNAc...) asparagine). Residue histidine 211 is part of the active site. A glycan (N-linked (GlcNAc...) asparagine) is linked at asparagine 321. Cysteine 322 and cysteine 328 are disulfide-bonded. Residues 328–354 form a PbH1 6 repeat; the sequence is CTDFTLSGVKITKASNTPKNVCVNLDG.

Belongs to the glycosyl hydrolase 28 family. Post-translationally, N-glycosylated.

The protein resides in the secreted. It catalyses the reaction [(1-&gt;4)-alpha-D-galacturonosyl](n) + H2O = alpha-D-galacturonate + [(1-&gt;4)-alpha-D-galacturonosyl](n-1). In terms of biological role, specific in hydrolyzing the terminal glycosidic bond of polygalacturonic acid and oligogalacturonates. Has no activity towards trigalacturonic acid. This is Exopolygalacturonase rpg13 from Rhizopus delemar (strain RA 99-880 / ATCC MYA-4621 / FGSC 9543 / NRRL 43880) (Mucormycosis agent).